Here is a 280-residue protein sequence, read N- to C-terminus: Large ribosomal subunit protein uL2 (280 aa).

Disordered stretches follow at residues 1–58 (MAIR…GGGH) and 226–280 (MNPV…KHGR). Basic residues-rich tracts occupy residues 37–58 (LHGHGGRNAHGRITTRHKGGGH) and 268–280 (IVRRRRTGKKHGR).

Belongs to the universal ribosomal protein uL2 family. As to quaternary structure, part of the 50S ribosomal subunit. Forms a bridge to the 30S subunit in the 70S ribosome.

Its function is as follows. One of the primary rRNA binding proteins. Required for association of the 30S and 50S subunits to form the 70S ribosome, for tRNA binding and peptide bond formation. It has been suggested to have peptidyltransferase activity; this is somewhat controversial. Makes several contacts with the 16S rRNA in the 70S ribosome. This Mycobacterium avium (strain 104) protein is Large ribosomal subunit protein uL2.